Consider the following 299-residue polypeptide: DNA-binding transcriptional activator HetR (299 aa).

The tract at residues 1 to 98 (MSNDIDLIKR…GKLLKTLGSQ (98 aa)) is DNA-binding domain. DNA contacts are provided by residues 34 to 40 (RHGAFLD) and 60 to 76 (NLRMTGHLHHLEPKRVK). The segment at 99 to 216 (EPRYLIQFPY…FYALTRPFYA (118 aa)) is flap domain. The active site involves Ser-152. 179–181 (SEA) serves as a coordination point for DNA. Positions 217 to 299 (PADDQERTYI…LQMVFGRKED (83 aa)) are hood domain.

It belongs to the peptidase S48 family. In terms of assembly, upon expression in E.coli most protein is monomeric, although varying amounts of homodimer can be seen. Homodimer; disulfide-linked. Homodimer. Binds the 6 residue C-terminal peptide of PatS; one peptide binds to each subunit. In bacterial two-hybrid assays interacts robustly with itself, Alr2902 and Alr3234 and more weakly with Als1930. Post-translationally, probably autodegrades.

Its activity is regulated as follows. Protease activity is inhibited by PMSF, suggesting this is a serine protease. Its function is as follows. Controls heterocyst differentiation. Dimerization is required for DNA-binding. Has both a protease and a DNA-binding activity. In terms of biological role, controls heterocyst differentiation; increased expression leads to more heterocysts than usual. Has protease activity. Binds the promoter regions of hetR, hepA and patS and is required for their expression. Dimerization is required for DNA-binding, DNA-binding is inhibited by the PatS6 peptide. Binds the inverted repeat 5'-GTAGGCGAGGGGTCTAACCCCTCATTACC-3' found in the hetP promoter, required for expression of hetP. The polypeptide is DNA-binding transcriptional activator HetR (Nostoc sp. (strain PCC 7120 / SAG 25.82 / UTEX 2576)).